The chain runs to 96 residues: Small ribosomal subunit protein bS6 (96 aa).

Belongs to the bacterial ribosomal protein bS6 family.

Binds together with bS18 to 16S ribosomal RNA. This Heliobacterium modesticaldum (strain ATCC 51547 / Ice1) protein is Small ribosomal subunit protein bS6.